A 377-amino-acid chain; its full sequence is Histone deacetylase 8 (377 aa).

The segment at 14–324 is histone deacetylase; sequence LPPVYIYSPE…WTYLTGVILG (311 aa). Phosphoserine is present on serine 39. Residue aspartate 101 participates in substrate binding. Histidine 143 serves as the catalytic Proton acceptor. A substrate-binding site is contributed by glycine 151. A divalent metal cation contacts are provided by aspartate 178, histidine 180, and aspartate 267. Residue tyrosine 306 coordinates substrate.

Belongs to the histone deacetylase family. HD type 1 subfamily. Interacts with CBFA2T3. Interacts with phosphorylated SMG5/EST1B; this interaction protects SMG5 from ubiquitin-mediated degradation. Associates with alpha-SMA (smooth muscle alpha-actin). A divalent metal cation serves as cofactor. Phosphorylated by PKA on serine 39. Phosphorylation reduces deacetylase activity observed preferentially on histones H3 and H4.

It localises to the nucleus. The protein localises to the chromosome. The protein resides in the cytoplasm. It catalyses the reaction N(6)-acetyl-L-lysyl-[histone] + H2O = L-lysyl-[histone] + acetate. The enzyme catalyses N(6)-acetyl-L-lysyl-[protein] + H2O = L-lysyl-[protein] + acetate. The catalysed reaction is N(6)-(2E)-butenoyl-L-lysyl-[protein] + H2O = (2E)-2-butenoate + L-lysyl-[protein]. Its activity is inhibited by trichostatin A (TSA) and butyrate, 2 well known histone deacetylase inhibitors. Histone deacetylase that catalyzes the deacetylation of lysine residues on the N-terminal part of the core histones (H2A, H2B, H3 and H4). Histone deacetylation gives a tag for epigenetic repression and plays an important role in transcriptional regulation, cell cycle progression and developmental events. Histone deacetylases act via the formation of large multiprotein complexes. Also involved in the deacetylation of cohesin complex protein SMC3 regulating release of cohesin complexes from chromatin. May play a role in smooth muscle cell contractility. In addition to protein deacetylase activity, also has protein-lysine deacylase activity: acts as a protein decrotonylase by mediating decrotonylation ((2E)-butenoyl) of histones. In Bos taurus (Bovine), this protein is Histone deacetylase 8 (HDAC8).